Reading from the N-terminus, the 188-residue chain is Pyridoxal 5'-phosphate synthase subunit PdxT (188 aa).

Residue 46 to 48 (GES) participates in L-glutamine binding. Cys-78 serves as the catalytic Nucleophile. Residues Arg-105 and 134–135 (IR) contribute to the L-glutamine site. Residues His-170 and Glu-172 each act as charge relay system in the active site.

Belongs to the glutaminase PdxT/SNO family. In the presence of PdxS, forms a dodecamer of heterodimers. Only shows activity in the heterodimer.

It catalyses the reaction aldehydo-D-ribose 5-phosphate + D-glyceraldehyde 3-phosphate + L-glutamine = pyridoxal 5'-phosphate + L-glutamate + phosphate + 3 H2O + H(+). It carries out the reaction L-glutamine + H2O = L-glutamate + NH4(+). Its pathway is cofactor biosynthesis; pyridoxal 5'-phosphate biosynthesis. Catalyzes the hydrolysis of glutamine to glutamate and ammonia as part of the biosynthesis of pyridoxal 5'-phosphate. The resulting ammonia molecule is channeled to the active site of PdxS. The sequence is that of Pyridoxal 5'-phosphate synthase subunit PdxT from Thermotoga petrophila (strain ATCC BAA-488 / DSM 13995 / JCM 10881 / RKU-1).